The following is a 353-amino-acid chain: MSDDEFIDEYDDIYSKLCQEAQDFLIIKDIERIEKPTALEFYREYVSQNKPVIITGLLENWKAYKEWSDDYLENVMKDVEVTVSITNDGLADAVKPINENDPKSERVFCKPFEKKIKFQEYIKHSKKSSKENKNKLAYYIQYQNNSLNVEYDKLLNDIDESVIDFAKEAFGSNIDATNFWMGQDKSVSSLHQDPYENMYCVVRGTKIFTLLPPIDYPFLYKSEFPSASFVNVGCDDNDENIKLEIQIDNDPKMNIPWIPVDPTETLENNIKLGYPLIERAHPITIRVEAGEVLYLPSLYFHRVAQESNKTSNSLSTIAINYWFDMKYGINYVYFQFLKETTKYQKQIKNKNKK.

Positions 138–348 constitute a JmjC domain; the sequence is YYIQYQNNSL…ETTKYQKQIK (211 aa).

The sequence is that of JmjC domain-containing protein E (jcdE) from Dictyostelium discoideum (Social amoeba).